The following is a 517-amino-acid chain: tRNA-2-methylthio-N(6)-dimethylallyladenosine synthase (517 aa).

In terms of domain architecture, MTTase N-terminal spans 29–146; it reads RTYQVRTYGC…LPTLLERARH (118 aa). 6 residues coordinate [4Fe-4S] cluster: Cys-38, Cys-75, Cys-109, Cys-183, Cys-187, and Cys-190. The region spanning 169 to 405 is the Radical SAM core domain; that stretch reads RESAYAAWVS…VELQESISLQ (237 aa). The TRAM domain occupies 408–475; sequence QALVGQTVEL…PHHLIADAGV (68 aa).

Belongs to the methylthiotransferase family. MiaB subfamily. In terms of assembly, monomer. [4Fe-4S] cluster is required as a cofactor.

The protein localises to the cytoplasm. It catalyses the reaction N(6)-dimethylallyladenosine(37) in tRNA + (sulfur carrier)-SH + AH2 + 2 S-adenosyl-L-methionine = 2-methylsulfanyl-N(6)-dimethylallyladenosine(37) in tRNA + (sulfur carrier)-H + 5'-deoxyadenosine + L-methionine + A + S-adenosyl-L-homocysteine + 2 H(+). Its function is as follows. Catalyzes the methylthiolation of N6-(dimethylallyl)adenosine (i(6)A), leading to the formation of 2-methylthio-N6-(dimethylallyl)adenosine (ms(2)i(6)A) at position 37 in tRNAs that read codons beginning with uridine. This is tRNA-2-methylthio-N(6)-dimethylallyladenosine synthase from Mycolicibacterium paratuberculosis (strain ATCC BAA-968 / K-10) (Mycobacterium paratuberculosis).